The following is a 139-amino-acid chain: Large ribosomal subunit protein uL13 (139 aa).

It belongs to the universal ribosomal protein uL13 family. In terms of assembly, part of the 50S ribosomal subunit.

In terms of biological role, this protein is one of the early assembly proteins of the 50S ribosomal subunit, although it is not seen to bind rRNA by itself. It is important during the early stages of 50S assembly. The chain is Large ribosomal subunit protein uL13 from Nitratiruptor sp. (strain SB155-2).